The sequence spans 80 residues: Exodeoxyribonuclease 7 small subunit (80 aa).

Belongs to the XseB family. As to quaternary structure, heterooligomer composed of large and small subunits.

Its subcellular location is the cytoplasm. It catalyses the reaction Exonucleolytic cleavage in either 5'- to 3'- or 3'- to 5'-direction to yield nucleoside 5'-phosphates.. Its function is as follows. Bidirectionally degrades single-stranded DNA into large acid-insoluble oligonucleotides, which are then degraded further into small acid-soluble oligonucleotides. In Rickettsia felis (strain ATCC VR-1525 / URRWXCal2) (Rickettsia azadi), this protein is Exodeoxyribonuclease 7 small subunit.